The following is a 103-amino-acid chain: Thrombin inhibitor rhodniin (103 aa).

2 Kazal-like domains span residues 1-50 (EGGE…PCEP) and 51-103 (DEDE…PCRT). 6 cysteine pairs are disulfide-bonded: cysteine 6-cysteine 31, cysteine 8-cysteine 27, cysteine 16-cysteine 48, cysteine 57-cysteine 84, cysteine 60-cysteine 80, and cysteine 69-cysteine 101.

It is found in the secreted. Thrombin-specific inhibitor. Appears to form 1:1 complexes with thrombin. Prevents blood clotting to allow the insect to feed on blood. The protein is Thrombin inhibitor rhodniin of Rhodnius prolixus (Triatomid bug).